A 557-amino-acid polypeptide reads, in one-letter code: Nucleolin 1 (557 aa).

Disordered regions lie at residues methionine 1 to lysine 297, glycine 376 to glycine 398, and leucine 474 to glutamate 557. Residues glutamine 49–serine 63 show a composition bias toward basic and acidic residues. 3 stretches are compositionally biased toward acidic residues: residues serine 64–glutamate 74, glutamate 91–glutamate 101, and serine 124–valine 135. Over residues alanine 174–serine 184 the composition is skewed to low complexity. Over residues serine 186–aspartate 197 the composition is skewed to acidic residues. Residues lysine 203–aspartate 217 show a composition bias toward low complexity. The span at serine 218 to aspartate 229 shows a compositional bias: acidic residues. The segment covering glutamate 230–serine 247 has biased composition (basic and acidic residues). The span at glutamate 249 to glutamate 263 shows a compositional bias: acidic residues. A compositionally biased stretch (basic and acidic residues) spans threonine 264 to serine 281. The 78-residue stretch at lysine 297 to glutamate 374 folds into the RRM 1 domain. Residues lysine 401 to proline 481 enclose the RRM 2 domain. The segment covering serine 485 to glycine 503 has biased composition (gly residues).

As to quaternary structure, interacts with THAL in the nucleus. As to expression, expressed in roots, leaves, shoots and flowers.

Its subcellular location is the nucleus. It is found in the nucleolus. In terms of biological role, involved in pre-rRNA processing and ribosome assembly. Is associated with intranucleolar chromatin and pre-ribosomal particles and plays a role in controlling activation and repression of a specific subset of rRNA genes located in distinctive nucleolar organizer regions. Binds specifically rDNA chromatin and may be required to maintain rDNA chromatin structure, but is probably not required for the overall histone methylation status of 45S rRNA genes. Involved in leaf polarity establishment by functioning cooperatively with AS1 to repress abaxial genes ARF3, ARF4, KAN1, KAN2, YAB1 and YAB5, and the knox homeobox genes KNAT1, KNAT2, KNAT6, and STM to promote adaxial development in leaf primordia at shoot apical meristems at high temperatures. The sequence is that of Nucleolin 1 from Arabidopsis thaliana (Mouse-ear cress).